Here is a 436-residue protein sequence, read N- to C-terminus: Ribosome biogenesis protein WDR12 homolog (436 aa).

The segment at 13 to 97 is ubiquitin-like (UBL) domain; that stretch reads VRVRFLTKLP…ERVLELEYVK (85 aa). WD repeat units lie at residues 109 to 147, 149 to 193, 203 to 242, 273 to 311, 313 to 353, 359 to 399, and 402 to 436; these read PHDD…THIL, GHSD…SVPK, GHTS…EDGD, GHTQ…ETWN, VSGK…TLAP, SHKS…PLAS, and SHKD…IEIV. Positions 240-262 are disordered; sequence DGDTVSVKKRRTNSDSSGPEESL.

This sequence belongs to the WD repeat WDR12/YTM1 family.

The protein resides in the nucleus. The protein localises to the nucleolus. Its subcellular location is the nucleoplasm. Functionally, required for maturation of ribosomal RNAs and formation of the large ribosomal subunit. The polypeptide is Ribosome biogenesis protein WDR12 homolog (Oryza sativa subsp. japonica (Rice)).